An 89-amino-acid chain; its full sequence is Small ribosomal subunit protein uS19 (89 aa).

Belongs to the universal ribosomal protein uS19 family.

Functionally, protein S19 forms a complex with S13 that binds strongly to the 16S ribosomal RNA. The chain is Small ribosomal subunit protein uS19 from Parabacteroides distasonis (strain ATCC 8503 / DSM 20701 / CIP 104284 / JCM 5825 / NCTC 11152).